Here is a 98-residue protein sequence, read N- to C-terminus: Large ribosomal subunit protein uL23 (98 aa).

Belongs to the universal ribosomal protein uL23 family. Part of the 50S ribosomal subunit. Contacts protein L29, and trigger factor when it is bound to the ribosome.

Its function is as follows. One of the early assembly proteins it binds 23S rRNA. One of the proteins that surrounds the polypeptide exit tunnel on the outside of the ribosome. Forms the main docking site for trigger factor binding to the ribosome. This chain is Large ribosomal subunit protein uL23, found in Clostridium kluyveri (strain NBRC 12016).